We begin with the raw amino-acid sequence, 427 residues long: 3-phosphoshikimate 1-carboxyvinyltransferase (427 aa).

Lysine 20, serine 21, and arginine 25 together coordinate 3-phosphoshikimate. Lysine 20 provides a ligand contact to phosphoenolpyruvate. Positions 92 and 120 each coordinate phosphoenolpyruvate. Serine 166, glutamine 168, aspartate 312, and lysine 339 together coordinate 3-phosphoshikimate. Residue glutamine 168 participates in phosphoenolpyruvate binding. Catalysis depends on aspartate 312, which acts as the Proton acceptor. Positions 343 and 385 each coordinate phosphoenolpyruvate.

It belongs to the EPSP synthase family. As to quaternary structure, monomer.

The protein localises to the cytoplasm. It catalyses the reaction 3-phosphoshikimate + phosphoenolpyruvate = 5-O-(1-carboxyvinyl)-3-phosphoshikimate + phosphate. Its pathway is metabolic intermediate biosynthesis; chorismate biosynthesis; chorismate from D-erythrose 4-phosphate and phosphoenolpyruvate: step 6/7. Catalyzes the transfer of the enolpyruvyl moiety of phosphoenolpyruvate (PEP) to the 5-hydroxyl of shikimate-3-phosphate (S3P) to produce enolpyruvyl shikimate-3-phosphate and inorganic phosphate. This is 3-phosphoshikimate 1-carboxyvinyltransferase from Streptococcus agalactiae serotype Ia (strain ATCC 27591 / A909 / CDC SS700).